The primary structure comprises 341 residues: Holliday junction branch migration complex subunit RuvB (341 aa).

A large ATPase domain (RuvB-L) region spans residues 1 to 182 (MTSSDPTLRP…FGIPTRLQFY (182 aa)). ATP is bound by residues Leu-21, Arg-22, Gly-63, Lys-66, Thr-67, Thr-68, 129 to 131 (EDF), Arg-172, Tyr-182, and Arg-219. Thr-67 is a binding site for Mg(2+). The tract at residues 183–253 (TEDELDLIVA…IADRALTRLG (71 aa)) is small ATPAse domain (RuvB-S). The segment at 256-341 (HLGLDLGDRR…KGPGQSDLFG (86 aa)) is head domain (RuvB-H). DNA is bound by residues Arg-292, Arg-311, and Arg-316.

This sequence belongs to the RuvB family. Homohexamer. Forms an RuvA(8)-RuvB(12)-Holliday junction (HJ) complex. HJ DNA is sandwiched between 2 RuvA tetramers; dsDNA enters through RuvA and exits via RuvB. An RuvB hexamer assembles on each DNA strand where it exits the tetramer. Each RuvB hexamer is contacted by two RuvA subunits (via domain III) on 2 adjacent RuvB subunits; this complex drives branch migration. In the full resolvosome a probable DNA-RuvA(4)-RuvB(12)-RuvC(2) complex forms which resolves the HJ.

The protein resides in the cytoplasm. It carries out the reaction ATP + H2O = ADP + phosphate + H(+). Functionally, the RuvA-RuvB-RuvC complex processes Holliday junction (HJ) DNA during genetic recombination and DNA repair, while the RuvA-RuvB complex plays an important role in the rescue of blocked DNA replication forks via replication fork reversal (RFR). RuvA specifically binds to HJ cruciform DNA, conferring on it an open structure. The RuvB hexamer acts as an ATP-dependent pump, pulling dsDNA into and through the RuvAB complex. RuvB forms 2 homohexamers on either side of HJ DNA bound by 1 or 2 RuvA tetramers; 4 subunits per hexamer contact DNA at a time. Coordinated motions by a converter formed by DNA-disengaged RuvB subunits stimulates ATP hydrolysis and nucleotide exchange. Immobilization of the converter enables RuvB to convert the ATP-contained energy into a lever motion, pulling 2 nucleotides of DNA out of the RuvA tetramer per ATP hydrolyzed, thus driving DNA branch migration. The RuvB motors rotate together with the DNA substrate, which together with the progressing nucleotide cycle form the mechanistic basis for DNA recombination by continuous HJ branch migration. Branch migration allows RuvC to scan DNA until it finds its consensus sequence, where it cleaves and resolves cruciform DNA. In Cereibacter sphaeroides (strain ATCC 17029 / ATH 2.4.9) (Rhodobacter sphaeroides), this protein is Holliday junction branch migration complex subunit RuvB.